Here is a 514-residue protein sequence, read N- to C-terminus: Voltage-gated potassium channel regulatory subunit KCNG1 (514 aa).

At 1-224 (MTLLPGDNSH…DMVERPHSGL (224 aa)) the chain is on the cytoplasmic side. Residues 180-196 (MEREEEEEPLDSEDQES) are compositionally biased toward acidic residues. A disordered region spans residues 180-205 (MEREEEEEPLDSEDQESEGPSASEGR). A helical transmembrane segment spans residues 225–246 (PGKVFACLSVLFVTVTAVNLSV). Over 247 to 267 (STLPSLREEEEQGQCSQMCHN) the chain is Extracellular. The chain crosses the membrane as a helical span at residues 268 to 289 (VFIVESVCVGWFSLEFLLRFIQ). Topologically, residues 290–300 (APSKFAFLRSP) are cytoplasmic. A helical transmembrane segment spans residues 301 to 321 (LTLIDLVAILPYYVTLLVDGA). Topologically, residues 322 to 338 (ASSRRKPSTGNSYLDKV) are extracellular. A helical; Voltage-sensor membrane pass occupies residues 339-359 (GLVLRVLRALRILYVMRLARH). Topologically, residues 360–374 (SLGLQTLGLTARRCT) are cytoplasmic. A helical transmembrane segment spans residues 375-396 (REFGLLLLFLCVAIALFAPLLY). Residues 397 to 411 (VIENEMADSPEFTSI) lie on the Extracellular side of the membrane. Residues 412–423 (PACYWWAVITMT) constitute an intramembrane region (helical). The Selectivity filter motif lies at 424-429 (TVGYGD). The stretch at 424–431 (TVGYGDMV) is an intramembrane region. The Extracellular portion of the chain corresponds to 432-438 (PRSTPGQ). The helical transmembrane segment at 439–467 (VVALSSILSGILLMAFPVTSIFHTFSRSY) threads the bilayer. Over 468–514 (LELKQEQERVLIRRAQYLIKTKSQLSGMSQDSDILFGSASSDTRDNN) the chain is Cytoplasmic.

The protein belongs to the potassium channel family. G (TC 1.A.1.2) subfamily. Kv6.1/KCNG1 sub-subfamily. Heterotetramer with KCNB1 or KCNB2.

The protein resides in the cell membrane. Functionally, regulatory alpha-subunit of the voltage-gated potassium (Kv) channel which, when coassembled with KCNB1 or KCNB2, can modulate their expression and their gating kinetics by acting on deactivation upon repolarization and inactivation during maintained depolarization. Potassium channel subunit that does not form functional channels by itself. This is Voltage-gated potassium channel regulatory subunit KCNG1 from Mus musculus (Mouse).